We begin with the raw amino-acid sequence, 445 residues long: MSTILESLPTGQKVGIAFSGGLDTSAALHWMKLKGAVPYAYTANLGQPDEDDYDAIPKRALEYGAAGARLIDCRAQLVAEGIAALQSGAFHITTAGVTYFNTTPIGRAVTGTMLVAAMKEDGVNIWGDGSTYKGNDIERFYRYGLLVNPDLKIYKPWLDQTFIDELGGRAEMSEFMRQSGFAYKMSAEKAYSTDSNLLGATHEAKDLESLESGIKIVNPIMGVAFWRDDVKIAAEEVTVRFEAGQPVALNGVEFKDQVELLLEANRIGGRHGLGMSDQIENRIIEAKSRGIYEAPGLALLYIAYERLVTGIHNEDTIEQYRENGRRLGRLLYQGRWFDPQAIMLRETAQRWVARAITGEVKIELRRGNDYSILSTKSPNLTYQPERLSMEKVASTFSPRDRIGQLTMRNLDITDTRDKLRVYTQVGLLTPGEASALPQIKGDSGE.

ATP contacts are provided by residues 17-25 (AFSGGLDTS) and alanine 43. Tyrosine 99 lines the L-citrulline pocket. ATP is bound by residues glycine 129 and threonine 131. 3 residues coordinate L-aspartate: threonine 131, asparagine 135, and aspartate 136. Asparagine 135 provides a ligand contact to L-citrulline. Residue aspartate 136 coordinates ATP. 2 residues coordinate L-citrulline: arginine 139 and serine 192. Aspartate 194 contacts ATP. L-citrulline-binding residues include threonine 201, glutamate 203, and glutamate 280.

It belongs to the argininosuccinate synthase family. Type 2 subfamily. Homotetramer.

The protein localises to the cytoplasm. The enzyme catalyses L-citrulline + L-aspartate + ATP = 2-(N(omega)-L-arginino)succinate + AMP + diphosphate + H(+). It participates in amino-acid biosynthesis; L-arginine biosynthesis; L-arginine from L-ornithine and carbamoyl phosphate: step 2/3. The protein is Argininosuccinate synthase (argG) of Burkholderia multivorans (strain ATCC 17616 / 249).